The chain runs to 134 residues: MVSQDFSREKRLLTPRHFKAVFDSPTGKVPGKNLLILARENGLDHPRLGLVIGKKSVKLAVQRNRLKRLMRDSFRLNQQSLAGLDIVIVARKGLGEIENPELHQHFGKLWKRLARSRPTPAATANSAGVDSQDA.

Belongs to the RnpA family. In terms of assembly, consists of a catalytic RNA component (M1 or rnpB) and a protein subunit.

It carries out the reaction Endonucleolytic cleavage of RNA, removing 5'-extranucleotides from tRNA precursor.. Its function is as follows. RNaseP catalyzes the removal of the 5'-leader sequence from pre-tRNA to produce the mature 5'-terminus. It can also cleave other RNA substrates such as 4.5S RNA. The protein component plays an auxiliary but essential role in vivo by binding to the 5'-leader sequence and broadening the substrate specificity of the ribozyme. This is Ribonuclease P protein component from Pseudomonas putida (strain GB-1).